A 1371-amino-acid polypeptide reads, in one-letter code: DNA-directed RNA polymerase subunit beta' (1371 aa).

Positions 71, 73, 86, and 89 each coordinate Zn(2+). Mg(2+)-binding residues include Asp-461, Asp-463, and Asp-465. Zn(2+) is bound by residues Cys-803, Cys-877, Cys-884, and Cys-887.

The protein belongs to the RNA polymerase beta' chain family. In terms of assembly, the RNAP catalytic core consists of 2 alpha, 1 beta, 1 beta' and 1 omega subunit. When a sigma factor is associated with the core the holoenzyme is formed, which can initiate transcription. The cofactor is Mg(2+). Zn(2+) serves as cofactor.

The enzyme catalyses RNA(n) + a ribonucleoside 5'-triphosphate = RNA(n+1) + diphosphate. Its function is as follows. DNA-dependent RNA polymerase catalyzes the transcription of DNA into RNA using the four ribonucleoside triphosphates as substrates. This Thermodesulfovibrio yellowstonii (strain ATCC 51303 / DSM 11347 / YP87) protein is DNA-directed RNA polymerase subunit beta'.